The following is a 2377-amino-acid chain: DNA (cytosine-5-)-methyltransferase DMT5 (2377 aa).

Residues 24-56 are disordered; it reads GTADGAVNGGNIPNSQSQKRKRASPSPEIESEE. Positions 62–126 constitute a Chromo; shadow subtype domain; that stretch reads YEIDYIADSR…KNPGKPRLSP (65 aa). Residues 150-282 are disordered; that stretch reads GKSRAASSTD…KSSLPKAKLR (133 aa). A compositionally biased stretch (basic residues) spans 201-213; sequence PTSKKVHPNKKCK. 2 stretches are compositionally biased toward acidic residues: residues 217–238 and 245–263; these read DDES…DDND and EDDE…ESDE. Basic residues predominate over residues 268–282; the sequence is PAKKTKSSLPKAKLR. An SAM-dependent MTase C5-type domain is found at 347–753; sequence LRVATMCSGT…IAALKVACHK (407 aa). Cys-440 is an active-site residue. The 322-residue stretch at 1450–1771 folds into the Helicase ATP-binding domain; it reads AERPVMVRGG…RSIATFMGIH (322 aa). 1463 to 1470 lines the ATP pocket; it reads DQVGYGKT. Disordered regions lie at residues 1642–1680, 2313–2334, and 2347–2377; these read KGQA…ENSK, KGRG…TVKS, and SSFR…SDII. The span at 1645 to 1669 shows a compositional bias: basic and acidic residues; that stretch reads AYRDKHDSDSKAKPITKEELERWEA. The Helicase C-terminal domain maps to 2152-2315; the sequence is KLEHLVNLIH…EIPQEEYKGR (164 aa). A compositionally biased stretch (polar residues) spans 2317–2334; sequence SSISMTNEKRTPTLTVKS. Over residues 2363–2377 the composition is skewed to acidic residues; the sequence is GVSDDDENSELSDII.

In the N-terminal section; belongs to the class I-like SAM-binding methyltransferase superfamily. C5-methyltransferase family. This sequence in the C-terminal section; belongs to the SNF2/RAD54 helicase family. In terms of assembly, interacts with SWI6. Mg(2+) is required as a cofactor.

It localises to the nucleus. It is found in the chromosome. The catalysed reaction is a 2'-deoxycytidine in DNA + S-adenosyl-L-methionine + ATP + H2O = a 5-methyl-2'-deoxycytidine in DNA + S-adenosyl-L-homocysteine + ADP + phosphate + 2 H(+). Hemimethylated DNA substrates stimulate ATP hydrolysis and this is a prerequisite for methyltransferase activity. In terms of biological role, ATP-dependent cytosine methylase that maintains DNA methylation by acting at hemimethylated palindromic 5'-CG-3' sites to produce symmetrically methylated DNA strands. DNA methylation may play a role in transcriptional silencing, particularly at transposable elements. In Cryptococcus neoformans var. grubii serotype A (strain H99 / ATCC 208821 / CBS 10515 / FGSC 9487) (Filobasidiella neoformans var. grubii), this protein is DNA (cytosine-5-)-methyltransferase DMT5.